Reading from the N-terminus, the 427-residue chain is Kallistatin (427 aa).

The signal sequence occupies residues 1–20 (MHLIDYLLLLLVGLLALSHG). Residues Asn-33, Asn-108, and Asn-157 are each glycosylated (N-linked (GlcNAc...) asparagine). N-linked (GlcNAc...) (complex) asparagine glycosylation is present at Asn-238.

It belongs to the serpin family. As to quaternary structure, monomer and some homodimers. Post-translationally, the N-terminus is blocked. In terms of tissue distribution, expressed by the liver and secreted in plasma.

It localises to the secreted. Inhibits human amidolytic and kininogenase activities of tissue kallikrein. Inhibition is achieved by formation of an equimolar, heat- and SDS-stable complex between the inhibitor and the enzyme, and generation of a small C-terminal fragment of the inhibitor due to cleavage at the reactive site by tissue kallikrein. In Homo sapiens (Human), this protein is Kallistatin (SERPINA4).